The chain runs to 141 residues: 6,7-dimethyl-8-ribityllumazine synthase (141 aa).

Residues Phe11, 42 to 44 (ALE), and 66 to 68 (VVI) contribute to the 5-amino-6-(D-ribitylamino)uracil site. 71–72 (ET) provides a ligand contact to (2S)-2-hydroxy-3-oxobutyl phosphate. The Proton donor role is filled by His74. Position 98 (Asn98) interacts with 5-amino-6-(D-ribitylamino)uracil. Arg112 provides a ligand contact to (2S)-2-hydroxy-3-oxobutyl phosphate.

Belongs to the DMRL synthase family.

The enzyme catalyses (2S)-2-hydroxy-3-oxobutyl phosphate + 5-amino-6-(D-ribitylamino)uracil = 6,7-dimethyl-8-(1-D-ribityl)lumazine + phosphate + 2 H2O + H(+). The protein operates within cofactor biosynthesis; riboflavin biosynthesis; riboflavin from 2-hydroxy-3-oxobutyl phosphate and 5-amino-6-(D-ribitylamino)uracil: step 1/2. Functionally, catalyzes the formation of 6,7-dimethyl-8-ribityllumazine by condensation of 5-amino-6-(D-ribitylamino)uracil with 3,4-dihydroxy-2-butanone 4-phosphate. This is the penultimate step in the biosynthesis of riboflavin. This Sphingopyxis alaskensis (strain DSM 13593 / LMG 18877 / RB2256) (Sphingomonas alaskensis) protein is 6,7-dimethyl-8-ribityllumazine synthase.